A 313-amino-acid polypeptide reads, in one-letter code: Intracellular endo-alpha-(1-&gt;5)-L-arabinanase (313 aa).

Residue aspartate 27 is the Proton acceptor of the active site. Substrate-binding positions include aspartate 27, glycine 105, 144 to 147 (NAID), and 164 to 166 (SFW). Catalysis depends on glutamate 201, which acts as the Proton donor. Residue histidine 271 participates in Ca(2+) binding.

Belongs to the glycosyl hydrolase 43 family. In terms of assembly, monomer. The cofactor is Ca(2+).

The protein localises to the cytoplasm. The enzyme catalyses Endohydrolysis of (1-&gt;5)-alpha-arabinofuranosidic linkages in (1-&gt;5)-arabinans.. Its pathway is glycan metabolism; L-arabinan degradation. In terms of biological role, involved in the degradation of arabinan and is a key enzyme in the complete degradation of the plant cell wall. Catalyzes the cleavage of endo alpha-(1-&gt;5)-L-arabinofuranosyl residues in debranched arabinan. The chain is Intracellular endo-alpha-(1-&gt;5)-L-arabinanase (abn-ts) from Geobacillus thermodenitrificans.